Here is a 476-residue protein sequence, read N- to C-terminus: Protein transport protein Sec61 subunit alpha (476 aa).

At 2 to 33 (GIKFLEVIKPFCAVLPEIQKPERKIQFREKVL) the chain is on the cytoplasmic side. A helical membrane pass occupies residues 34–53 (WTAITLFIFLVCCQIPLFGI). The Lumenal portion of the chain corresponds to 54–76 (MSSDSADPFYWMRVILASNRGTL). The helical transmembrane segment at 77-96 (MELGISPIVTSGLIMQLLAG) threads the bilayer. The Cytoplasmic segment spans residues 97 to 117 (AKIIEVGDTPKDRALFNGAQK). The chain crosses the membrane as a helical span at residues 118 to 138 (LFGMIITIGQAIVYVMTGMYG). The Lumenal segment spans residues 139-144 (DPSEMG). A helical membrane pass occupies residues 145–165 (AGICLVIIIQLFVAGLIVLLL). Residues 166–172 (DELLQKG) are Cytoplasmic-facing. A helical membrane pass occupies residues 173–193 (YGLGSGISLFIATNICETIVW). The Lumenal segment spans residues 194-240 (KAFSPTTVNTGRGTEFEGAIIALFHLLATRTDKVRALREAFYRQNLP). The chain crosses the membrane as a helical span at residues 241 to 261 (NLMNLIATVFVFAVVIYFQGF). Over 262–288 (RVDLPIKSARYRGQYNTYPIKLFYTSN) the chain is Cytoplasmic. A helical transmembrane segment spans residues 289 to 309 (IPIILQSALVSNLYVISQMLS). Residues 310–354 (TRFSGNFLVNLLGTWSDTSTGGPARAYPVGGLCYYFSPPESFGSV) are Lumenal-facing. The chain crosses the membrane as a helical span at residues 355-375 (LDDPVHASIYIVFMLGSCAFF). Residues 376–420 (SKTWIEVSGSSAKDVAKQLKEQQMVMRGHRETSMVHELNRYIPTA) lie on the Cytoplasmic side of the membrane. Residues 421 to 441 (AAFGGLCIGGLSVMADFLGAI) form a helical membrane-spanning segment. The Lumenal segment spans residues 442–445 (GSGT). A helical membrane pass occupies residues 446–462 (GILLAVTIIYQYFEIFV). Residues 463-476 (KEQSEMGSMGALLF) lie on the Cytoplasmic side of the membrane.

This sequence belongs to the SecY/SEC61-alpha family. The SEC61 channel-forming translocon complex consists of channel-forming core components SEC61A1, SEC61B and SEC61G and different auxiliary components such as SEC62 and SEC63. The SEC61 channel associates with the multi-pass translocon (MPT) complex.

The protein resides in the endoplasmic reticulum membrane. Component of SEC61 channel-forming translocon complex that mediates transport of signal peptide-containing precursor polypeptides across the endoplasmic reticulum (ER). Forms a ribosome receptor and a gated pore in the ER membrane, both functions required for cotranslational translocation of nascent polypeptides. May cooperate with auxiliary protein SEC62, SEC63 and HSPA5/BiP to enable post-translational transport of small presecretory proteins. The SEC61 channel is also involved in ER membrane insertion of transmembrane proteins: it mediates membrane insertion of the first few transmembrane segments of proteins, while insertion of subsequent transmembrane regions of multi-pass membrane proteins is mediated by the multi-pass translocon (MPT) complex. The chain is Protein transport protein Sec61 subunit alpha (sec61a) from Gadus ogac (Greenland cod).